A 151-amino-acid polypeptide reads, in one-letter code: NADPH-dependent 7-cyano-7-deazaguanine reductase (151 aa).

C51 functions as the Thioimide intermediate in the catalytic mechanism. D58 (proton donor) is an active-site residue. Substrate contacts are provided by residues 73 to 75 and 92 to 93; these read VES and HE.

Belongs to the GTP cyclohydrolase I family. QueF type 1 subfamily.

It localises to the cytoplasm. It carries out the reaction 7-aminomethyl-7-carbaguanine + 2 NADP(+) = 7-cyano-7-deazaguanine + 2 NADPH + 3 H(+). The protein operates within tRNA modification; tRNA-queuosine biosynthesis. Functionally, catalyzes the NADPH-dependent reduction of 7-cyano-7-deazaguanine (preQ0) to 7-aminomethyl-7-deazaguanine (preQ1). In Bacteroides thetaiotaomicron (strain ATCC 29148 / DSM 2079 / JCM 5827 / CCUG 10774 / NCTC 10582 / VPI-5482 / E50), this protein is NADPH-dependent 7-cyano-7-deazaguanine reductase.